The primary structure comprises 260 residues: UPF0246 protein BPSL1241 (260 aa).

The protein belongs to the UPF0246 family.

In Burkholderia pseudomallei (strain K96243), this protein is UPF0246 protein BPSL1241.